Reading from the N-terminus, the 204-residue chain is Outer-membrane lipoprotein LolB (204 aa).

An N-terminal signal peptide occupies residues 1 to 16 (MLRHLLVFSLIALLAG). Cysteine 17 carries the N-palmitoyl cysteine lipid modification. Cysteine 17 carries the S-diacylglycerol cysteine lipid modification.

This sequence belongs to the LolB family. Monomer.

The protein resides in the cell outer membrane. Functionally, plays a critical role in the incorporation of lipoproteins in the outer membrane after they are released by the LolA protein. In Ectopseudomonas mendocina (strain ymp) (Pseudomonas mendocina), this protein is Outer-membrane lipoprotein LolB.